The following is a 323-amino-acid chain: Glucokinase (323 aa).

An ATP-binding site is contributed by 8–13 (GDVGGT).

This sequence belongs to the bacterial glucokinase family.

It is found in the cytoplasm. It catalyses the reaction D-glucose + ATP = D-glucose 6-phosphate + ADP + H(+). The protein is Glucokinase of Yersinia enterocolitica serotype O:8 / biotype 1B (strain NCTC 13174 / 8081).